A 715-amino-acid polypeptide reads, in one-letter code: Lactococcin transport/processing ATP-binding protein LcnC-like (715 aa).

One can recognise a Peptidase C39 domain in the interval Q11–L138. C17 is an active-site residue. 5 consecutive transmembrane segments (helical) span residues V167–Y187, I197–I217, L237–F257, T282–L302, and L307–P327. An ABC transmembrane type-1 domain is found at I168–K450. In terms of domain architecture, ABC transporter spans L482–N715. G515–S522 is a binding site for ATP.

It belongs to the ABC transporter superfamily. HlyB family.

Its subcellular location is the cell membrane. Involved in the export process of a bacteriocin lactococcin. This is Lactococcin transport/processing ATP-binding protein LcnC-like (lcnC) from Lactococcus lactis subsp. lactis (strain IL1403) (Streptococcus lactis).